Consider the following 330-residue polypeptide: Elongation factor Ts (330 aa).

The segment at 79–82 is involved in Mg(2+) ion dislocation from EF-Tu; sequence TDFV.

The protein belongs to the EF-Ts family.

The protein resides in the cytoplasm. In terms of biological role, associates with the EF-Tu.GDP complex and induces the exchange of GDP to GTP. It remains bound to the aminoacyl-tRNA.EF-Tu.GTP complex up to the GTP hydrolysis stage on the ribosome. This Bacteroides thetaiotaomicron (strain ATCC 29148 / DSM 2079 / JCM 5827 / CCUG 10774 / NCTC 10582 / VPI-5482 / E50) protein is Elongation factor Ts.